The sequence spans 177 residues: Large ribosomal subunit protein uL6 (177 aa).

As to quaternary structure, part of the 50S ribosomal subunit.

Functionally, this protein binds to the 23S rRNA, and is important in its secondary structure. It is located near the subunit interface in the base of the L7/L12 stalk, and near the tRNA binding site of the peptidyltransferase center. This Rhodopseudomonas palustris (strain ATCC BAA-98 / CGA009) protein is Large ribosomal subunit protein uL6.